The sequence spans 1785 residues: Plexin-2 (1785 aa).

The first 17 residues, 1–17 (MLPESVFLLLISHFLRA), serve as a signal peptide directing secretion. The 427-residue stretch at 18–444 (VTQPPFETEG…MPYGIILEEL (427 aa)) folds into the Sema domain. Residues 18–1139 (VTQPPFETEG…SDHALPSRLS (1122 aa)) are Extracellular-facing. N-linked (GlcNAc...) asparagine glycosylation occurs at Asn66. Intrachain disulfides connect Cys84–Cys91, Cys118–Cys126, Cys247–Cys349, Cys263–Cys300, Cys318–Cys336, Cys447–Cys464, Cys453–Cys487, Cys456–Cys473, and Cys467–Cys479. Asn249 carries an N-linked (GlcNAc...) asparagine glycan. In terms of domain architecture, PSI 1 spans 446–488 (TCSHHSSCTECLVSVDPLCQWCHPTQSCTTSARCTSPVTSQCP). N-linked (GlcNAc...) asparagine glycans are attached at residues Asn502, Asn536, and Asn572. Cys524 and Cys544 are oxidised to a cystine. The PSI 2 domain maps to 577-617 (DCSGYGTCSSCMSSEYNCAWCSGLHKCSNSCGALEKSKACV). Asn679 and Asn702 each carry an N-linked (GlcNAc...) asparagine glycan. The 42-residue stretch at 707–748 (SCTNLASDCSSCLALSPSLSCGWCNRQCSHECHESKATAVCD) folds into the PSI 3 domain. IPT/TIG domains follow at residues 750-837 (PRID…LYSF), 840-924 (TSIF…PFEY), and 928-1040 (PSIS…LSPF). Residues Asn864, Asn886, Asn984, and Asn1016 are each glycosylated (N-linked (GlcNAc...) asparagine). A helical membrane pass occupies residues 1140-1160 (LLILGLLLFIVVTLTVMCLVF). The stretch at 1159–1197 (VFKRRRQEREKEYRKIQLQMENLENNVRKECKQAFAELQ) forms a coiled coil. Residues 1161 to 1785 (KRRRQEREKE…HIYSTISDYE (625 aa)) are Cytoplasmic-facing.

The protein belongs to the plexin family. As to quaternary structure, interacts with mab-20. Expressed predominantly in the central nervous system from embryonic to adult stages. Expressed in early embryos in ventral neuroblasts. Expressed in neurons and in a subset of posterior lateral and ventral epidermal cells following epidermal enclosure. Present in neurons, muscles and weakly expressed in epidermal cells of the larval tail.

Its subcellular location is the cell membrane. Its function is as follows. Involved as a receptor for mab-20/sema-2a in the formation or stabilization of cell-cell contacts at several stages of epithelial morphogenesis. In early embryonic development, required for proper ventral closure of the epidermis. During male tail morphogenesis, involved in precursor cell sorting and in the formation of distinct sensory rays. Involved in axon guidance of SDQL neurons during neurogenesis. Probably in response to stimulation by mab-20, regulates fln-1-mediated remodeling of the actin cytoskeleton and thus axon guidance and/or fasciculation of DD/VD neurons. This Caenorhabditis elegans protein is Plexin-2.